Consider the following 361-residue polypeptide: MDSALPVSAIGFEGFEKRLEISFFEPGLFADPNGKGLRSLSKAQLDEILGPAECTIVDSLSNDDVDSYVLSESSLFVYSYKIIIKTCGTTKLLLAIPPILKLAETLSLKVQDVRYTRGSFIFPGAQSFPHRHFSEEVAVLDGYFGKLAAGSKAVIMGSPDKAQKWHVYSASAGPIQSNDPVYTLEMCMTGLDREKASVFYKTEGSSAAHMTVRSGIRKILPNSEICDFEFEPCGYSMNSIEGAALSTIHITPEDGFSYASFEAVGYDMKTMKLGPLVERVLACFEPDEFSIALHADVATKLLERVCSVDVKGYSLAEWSPEEFGKGGSIVYQKFTRTPFCGSPKSVLKGCWKEDEEKEEKE.

Residues glutamate 13 and glutamate 16 contribute to the active site. The active-site Schiff-base intermediate with substrate; via pyruvic acid is the serine 73. A Pyruvic acid (Ser); by autocatalysis modification is found at serine 73. The active-site Proton donor; for catalytic activity is cysteine 87. Residues serine 236 and histidine 249 each act as proton acceptor; for processing activity in the active site.

It belongs to the eukaryotic AdoMetDC family. The cofactor is pyruvate. Post-translationally, is synthesized initially as an inactive proenzyme. Formation of the active enzyme involves a self-maturation process in which the active site pyruvoyl group is generated from an internal serine residue via an autocatalytic post-translational modification. Two non-identical subunits are generated from the proenzyme in this reaction, and the pyruvate is formed at the N-terminus of the alpha chain, which is derived from the carboxyl end of the proenzyme. The post-translation cleavage follows an unusual pathway, termed non-hydrolytic serinolysis, in which the side chain hydroxyl group of the serine supplies its oxygen atom to form the C-terminus of the beta chain, while the remainder of the serine residue undergoes an oxidative deamination to produce ammonia and the pyruvoyl group blocking the N-terminus of the alpha chain.

The catalysed reaction is S-adenosyl-L-methionine + H(+) = S-adenosyl 3-(methylsulfanyl)propylamine + CO2. It functions in the pathway amine and polyamine biosynthesis; S-adenosylmethioninamine biosynthesis; S-adenosylmethioninamine from S-adenosyl-L-methionine: step 1/1. The chain is S-adenosylmethionine decarboxylase proenzyme (SAMDC) from Nicotiana tabacum (Common tobacco).